We begin with the raw amino-acid sequence, 826 residues long: Ferric-pyoverdine M114 receptor PbuA (826 aa).

The signal sequence occupies residues 1 to 44; the sequence is MSASRFMLRPLTRALLMHGATRTRLAGTGLGLALTLTAAPYVQA. Positions 110–119 match the TonB box motif; it reads DGNTVTVLGP. Positions 160–271 constitute a TBDR plug domain; it reads SLKETPQSVT…TAGGVNFVRK (112 aa). The TBDR beta-barrel domain maps to 276–826; the sequence is TAHTQLSLSA…NFVMSVKADF (551 aa). The TonB C-terminal box signature appears at 809–826; the sequence is GNFYGDPRNFVMSVKADF.

The protein belongs to the TonB-dependent receptor family.

The protein resides in the cell outer membrane. Specific receptor for the siderophore ferric pyoverdine (pseudobactin) M114. This chain is Ferric-pyoverdine M114 receptor PbuA (pbuA), found in Pseudomonas sp. (strain M114).